The sequence spans 577 residues: Arginine--tRNA ligase (577 aa).

The 'HIGH' region signature appears at 122–132; it reads PNVAKEMHVGH.

Belongs to the class-I aminoacyl-tRNA synthetase family. In terms of assembly, monomer.

Its subcellular location is the cytoplasm. It catalyses the reaction tRNA(Arg) + L-arginine + ATP = L-arginyl-tRNA(Arg) + AMP + diphosphate. This Aliivibrio salmonicida (strain LFI1238) (Vibrio salmonicida (strain LFI1238)) protein is Arginine--tRNA ligase.